Here is a 274-residue protein sequence, read N- to C-terminus: 2,3,4,5-tetrahydropyridine-2,6-dicarboxylate N-succinyltransferase (274 aa).

The protein belongs to the transferase hexapeptide repeat family.

The protein localises to the cytoplasm. It catalyses the reaction (S)-2,3,4,5-tetrahydrodipicolinate + succinyl-CoA + H2O = (S)-2-succinylamino-6-oxoheptanedioate + CoA. It participates in amino-acid biosynthesis; L-lysine biosynthesis via DAP pathway; LL-2,6-diaminopimelate from (S)-tetrahydrodipicolinate (succinylase route): step 1/3. The sequence is that of 2,3,4,5-tetrahydropyridine-2,6-dicarboxylate N-succinyltransferase from Klebsiella pneumoniae (strain 342).